The chain runs to 238 residues: Small ribosomal subunit protein uS2 (238 aa).

Belongs to the universal ribosomal protein uS2 family.

In Moorella thermoacetica (strain ATCC 39073 / JCM 9320), this protein is Small ribosomal subunit protein uS2.